The following is a 281-amino-acid chain: Arabinose operon regulatory protein (281 aa).

Residues Pro8, Thr24, Arg38, Tyr82, and His93 each contribute to the alpha-L-arabinopyanose site. Positions 180-279 constitute an HTH araC/xylS-type domain; that stretch reads RDACQYISDH…GASPSEFRAG (100 aa). DNA-binding regions (H-T-H motif) lie at residues 198–219 and 246–269; these read ASVA…RQQL and IATV…KKCT.

Homodimer.

Its subcellular location is the cytoplasm. Functionally, transcription factor that regulates the expression of several genes involved in the transport and metabolism of L-arabinose. This is Arabinose operon regulatory protein from Salmonella typhimurium (strain LT2 / SGSC1412 / ATCC 700720).